The chain runs to 478 residues: Sugar transporter ERD6-like 15 (478 aa).

The next 12 membrane-spanning stretches (helical) occupy residues 31–51, 67–87, 106–126, 129–149, 161–181, 185–205, 267–287, 305–325, 333–353, 366–386, 406–426, and 432–452; these read FVLA…IIGY, IADY…GALI, ILFV…LLDL, LLQG…ITEI, FAQL…TIVA, LAIL…FIPE, AFSL…GLNG, FGFI…TVLV, LLLV…ISFF, VLAL…MGSI, MCNL…SYLL, and GTFL…AKLV.

This sequence belongs to the major facilitator superfamily. Sugar transporter (TC 2.A.1.1) family.

It is found in the membrane. In terms of biological role, sugar transporter. The polypeptide is Sugar transporter ERD6-like 15 (Arabidopsis thaliana (Mouse-ear cress)).